A 198-amino-acid chain; its full sequence is uncharacterized protein (198 aa).

Positions 40 to 111 (GSALPPQAPT…LSRGAGQGAP (72 aa)) are disordered. The span at 60–74 (SSRTPGPRPPRSTLR) shows a compositional bias: low complexity.

This is an uncharacterized protein from Homo sapiens (Human).